Here is a 296-residue protein sequence, read N- to C-terminus: ADP-dependent (S)-NAD(P)H-hydrate dehydratase (296 aa).

The region spanning 18–292 is the YjeF C-terminal domain; the sequence is TALRFPHVFK…PAARWLRNRI (275 aa). (6S)-NADPHX contacts are provided by A53, G113, and H165. AMP is bound by residues 202–206 and G231; that span reads KGHKT. (6S)-NADPHX is bound at residue D232.

This sequence belongs to the NnrD/CARKD family. Homotetramer. The cofactor is Mg(2+).

The enzyme catalyses (6S)-NADHX + ADP = AMP + phosphate + NADH + H(+). It catalyses the reaction (6S)-NADPHX + ADP = AMP + phosphate + NADPH + H(+). Functionally, catalyzes the dehydration of the S-form of NAD(P)HX at the expense of ADP, which is converted to AMP. Together with NAD(P)HX epimerase, which catalyzes the epimerization of the S- and R-forms, the enzyme allows the repair of both epimers of NAD(P)HX, a damaged form of NAD(P)H that is a result of enzymatic or heat-dependent hydration. In Neisseria meningitidis serogroup B (strain ATCC BAA-335 / MC58), this protein is ADP-dependent (S)-NAD(P)H-hydrate dehydratase.